Reading from the N-terminus, the 230-residue chain is MKYKGTGSLILTALIGGIPSSTAVTMAFSNLSRKFSYLSELFFFSIILSWLVMFFRVIFYTFIIFEGMIYKLVLLLLPYFALLLMFAIFLYLKGNKNHEEGGSMSIKNPFSLSQAFTFGLIYSTISVISHYLKTHFGDEGIYVLSFLSGIMDIDAITLLLARLSDKGEIGVDVAAMGILLAVMSNNLFKSGYAIIFGSKKLKIYFLFVALFTLIYTTTLLILFDKLHMSS.

A run of 7 helical transmembrane segments spans residues serine 8–phenylalanine 28, serine 45–phenylalanine 65, leucine 72–leucine 92, proline 109–serine 129, isoleucine 141–alanine 161, methionine 176–phenylalanine 196, and isoleucine 203–phenylalanine 223.

To P.aeruginosa PA0043 and M.thermoautotrophicum MTH1451.

It is found in the cell membrane. This is an uncharacterized protein from Aquifex aeolicus (strain VF5).